The primary structure comprises 461 residues: Threonine/serine transporter ThrP (461 aa).

12 helical membrane-spanning segments follow: residues Ile17 to Thr37, Trp40 to Met60, Trp97 to Phe117, Ala123 to Val143, Ile156 to Phe176, Gly201 to Ile221, Ile244 to Ile264, Ile278 to Gly298, Val333 to Ile353, Phe360 to Ile380, Ile401 to Met421, and Ser430 to Leu450.

Belongs to the amino acid-polyamine-organocation (APC) superfamily.

It localises to the cell inner membrane. It carries out the reaction L-threonine(in) + H(+)(in) = L-threonine(out) + H(+)(out). The catalysed reaction is L-serine(in) + H(+)(in) = L-serine(out) + H(+)(out). Permease that mediates the proton-dependent threonine and serine uptake. In Salmonella typhi, this protein is Threonine/serine transporter ThrP.